Consider the following 121-residue polypeptide: uncharacterized protein (121 aa).

The next 2 membrane-spanning stretches (helical) occupy residues 26 to 46 (FIAL…ILVL) and 72 to 92 (AFLT…WLGL).

Its subcellular location is the membrane. This is an uncharacterized protein from Saccharomyces cerevisiae (strain ATCC 204508 / S288c) (Baker's yeast).